Here is a 206-residue protein sequence, read N- to C-terminus: dTTP/UTP pyrophosphatase (206 aa).

D79 functions as the Proton acceptor in the catalytic mechanism.

This sequence belongs to the Maf family. YhdE subfamily. A divalent metal cation is required as a cofactor.

Its subcellular location is the cytoplasm. The enzyme catalyses dTTP + H2O = dTMP + diphosphate + H(+). It catalyses the reaction UTP + H2O = UMP + diphosphate + H(+). Its function is as follows. Nucleoside triphosphate pyrophosphatase that hydrolyzes dTTP and UTP. May have a dual role in cell division arrest and in preventing the incorporation of modified nucleotides into cellular nucleic acids. The sequence is that of dTTP/UTP pyrophosphatase from Rhizobium meliloti (strain 1021) (Ensifer meliloti).